Reading from the N-terminus, the 250-residue chain is Ubiquinone/menaquinone biosynthesis C-methyltransferase UbiE (250 aa).

Residues S73, D94, and 122-123 (NA) each bind S-adenosyl-L-methionine.

The protein belongs to the class I-like SAM-binding methyltransferase superfamily. MenG/UbiE family.

It carries out the reaction a 2-demethylmenaquinol + S-adenosyl-L-methionine = a menaquinol + S-adenosyl-L-homocysteine + H(+). The enzyme catalyses a 2-methoxy-6-(all-trans-polyprenyl)benzene-1,4-diol + S-adenosyl-L-methionine = a 5-methoxy-2-methyl-3-(all-trans-polyprenyl)benzene-1,4-diol + S-adenosyl-L-homocysteine + H(+). The protein operates within quinol/quinone metabolism; menaquinone biosynthesis; menaquinol from 1,4-dihydroxy-2-naphthoate: step 2/2. Its pathway is cofactor biosynthesis; ubiquinone biosynthesis. Methyltransferase required for the conversion of demethylmenaquinol (DMKH2) to menaquinol (MKH2) and the conversion of 2-polyprenyl-6-methoxy-1,4-benzoquinol (DDMQH2) to 2-polyprenyl-3-methyl-6-methoxy-1,4-benzoquinol (DMQH2). This Legionella pneumophila (strain Lens) protein is Ubiquinone/menaquinone biosynthesis C-methyltransferase UbiE.